A 295-amino-acid polypeptide reads, in one-letter code: Protease HtpX (295 aa).

A run of 2 helical transmembrane segments spans residues isoleucine 4–leucine 24 and glutamine 42–serine 62. A Zn(2+)-binding site is contributed by histidine 147. Residue glutamate 148 is part of the active site. Position 151 (histidine 151) interacts with Zn(2+). The next 2 membrane-spanning stretches (helical) occupy residues valine 158–isoleucine 178 and isoleucine 199–phenylalanine 219. Position 224 (glutamate 224) interacts with Zn(2+).

The protein belongs to the peptidase M48B family. It depends on Zn(2+) as a cofactor.

The protein localises to the cell inner membrane. The chain is Protease HtpX from Pseudomonas syringae pv. syringae (strain B728a).